The sequence spans 253 residues: Phosphate import ATP-binding protein PstB (253 aa).

Residues 7-248 (IDARDVNFWY…PEKEATQNYI (242 aa)) enclose the ABC transporter domain. An ATP-binding site is contributed by 39–46 (GPSGCGKS).

The protein belongs to the ABC transporter superfamily. Phosphate importer (TC 3.A.1.7) family. As to quaternary structure, the complex is composed of two ATP-binding proteins (PstB), two transmembrane proteins (PstC and PstA) and a solute-binding protein (PstS).

It is found in the cell inner membrane. It carries out the reaction phosphate(out) + ATP + H2O = ADP + 2 phosphate(in) + H(+). Part of the ABC transporter complex PstSACB involved in phosphate import. Responsible for energy coupling to the transport system. This Bacteroides fragilis (strain ATCC 25285 / DSM 2151 / CCUG 4856 / JCM 11019 / LMG 10263 / NCTC 9343 / Onslow / VPI 2553 / EN-2) protein is Phosphate import ATP-binding protein PstB.